Reading from the N-terminus, the 814-residue chain is Cellulase/esterase CelE (814 aa).

The signal sequence occupies residues 1 to 34 (MKKIVSLVCVLVMLVSILGSFSVVAASPVKGFQV). A cellulase region spans residues 35-354 (SGTKLLDASG…AVFWWDNGYY (320 aa)). Catalysis depends on E193, which acts as the Proton donor; for cellulase activity. The Nucleophile; for cellulase activity role is filled by E316. The Dockerin domain occupies 409–479 (ANILYGDVNG…LLRSIDKFPA (71 aa)). Ca(2+)-binding residues include D415, N417, D419, G420, K421, D426, D451, V452, N453, D455, K457, and D462. An esterase region spans residues 490–814 (PGILYNGRFD…TAEIKNKLGW (325 aa)). The active-site Nucleophile; for esterase activity is S612.

The protein in the N-terminal section; belongs to the glycosyl hydrolase 5 (cellulase A) family. In the C-terminal section; belongs to the carbohydrate esterase 2 (CE2) family.

The protein localises to the secreted. The enzyme catalyses Endohydrolysis of (1-&gt;4)-beta-D-glucosidic linkages in cellulose, lichenin and cereal beta-D-glucans.. It carries out the reaction Deacetylation of xylans and xylo-oligosaccharides.. It participates in glycan metabolism; cellulose degradation. It functions in the pathway glycan degradation; xylan degradation. Its activity is regulated as follows. Esterase activity of the CE2 module is inhibited when this domain binds to cellohexaose or beta-glucan. Functionally, multifunctional enzyme involved in the degradation of plant cell wall polysaccharides. Displays endoglucanase activity against carboxymethyl cellulose (CMC) and barley beta-glucan. Also catalyzes the deacetylation of acetylated birchwood xylan and glucomannan, with a preference for the latter, and of the synthetic substrate 4-nitrophenyl acetate (4-NPAc). In Acetivibrio thermocellus (strain ATCC 27405 / DSM 1237 / JCM 9322 / NBRC 103400 / NCIMB 10682 / NRRL B-4536 / VPI 7372) (Clostridium thermocellum), this protein is Cellulase/esterase CelE.